We begin with the raw amino-acid sequence, 261 residues long: Type III pantothenate kinase (261 aa).

6–13 (DAGNTNVV) serves as a coordination point for ATP. 108–111 (GADR) serves as a coordination point for substrate. Aspartate 110 (proton acceptor) is an active-site residue. Position 130 (aspartate 130) interacts with K(+). ATP is bound at residue threonine 133. Threonine 185 is a substrate binding site.

Belongs to the type III pantothenate kinase family. In terms of assembly, homodimer. Requires NH4(+) as cofactor. The cofactor is K(+).

It localises to the cytoplasm. The enzyme catalyses (R)-pantothenate + ATP = (R)-4'-phosphopantothenate + ADP + H(+). It participates in cofactor biosynthesis; coenzyme A biosynthesis; CoA from (R)-pantothenate: step 1/5. Catalyzes the phosphorylation of pantothenate (Pan), the first step in CoA biosynthesis. This is Type III pantothenate kinase from Rhodospirillum centenum (strain ATCC 51521 / SW).